We begin with the raw amino-acid sequence, 298 residues long: Aspartate carbamoyltransferase catalytic subunit (298 aa).

The carbamoyl phosphate site is built by R53 and T54. Residue K81 coordinates L-aspartate. Positions 103, 132, and 135 each coordinate carbamoyl phosphate. Positions 166 and 218 each coordinate L-aspartate. The carbamoyl phosphate site is built by G259 and P260.

Belongs to the aspartate/ornithine carbamoyltransferase superfamily. ATCase family. Heterododecamer (2C3:3R2) of six catalytic PyrB chains organized as two trimers (C3), and six regulatory PyrI chains organized as three dimers (R2).

The enzyme catalyses carbamoyl phosphate + L-aspartate = N-carbamoyl-L-aspartate + phosphate + H(+). It participates in pyrimidine metabolism; UMP biosynthesis via de novo pathway; (S)-dihydroorotate from bicarbonate: step 2/3. Its function is as follows. Catalyzes the condensation of carbamoyl phosphate and aspartate to form carbamoyl aspartate and inorganic phosphate, the committed step in the de novo pyrimidine nucleotide biosynthesis pathway. This is Aspartate carbamoyltransferase catalytic subunit from Anaplasma marginale (strain St. Maries).